The primary structure comprises 347 residues: Anthranilate phosphoribosyltransferase (347 aa).

5-phospho-alpha-D-ribose 1-diphosphate is bound by residues G88, 91–92 (GD), T96, 98–101 (NIST), 116–124 (KHGGRSVSS), and S128. Position 88 (G88) interacts with anthranilate. Mg(2+) is bound at residue S100. Position 174 (R174) interacts with anthranilate. D233 and E234 together coordinate Mg(2+).

Belongs to the anthranilate phosphoribosyltransferase family. Homodimer. Mg(2+) is required as a cofactor.

It carries out the reaction N-(5-phospho-beta-D-ribosyl)anthranilate + diphosphate = 5-phospho-alpha-D-ribose 1-diphosphate + anthranilate. It participates in amino-acid biosynthesis; L-tryptophan biosynthesis; L-tryptophan from chorismate: step 2/5. In terms of biological role, catalyzes the transfer of the phosphoribosyl group of 5-phosphorylribose-1-pyrophosphate (PRPP) to anthranilate to yield N-(5'-phosphoribosyl)-anthranilate (PRA). This Polaromonas sp. (strain JS666 / ATCC BAA-500) protein is Anthranilate phosphoribosyltransferase.